A 402-amino-acid polypeptide reads, in one-letter code: Putative neuropeptide Y receptor 11 (402 aa).

The Extracellular portion of the chain corresponds to 1-45; it reads MGSVNESCDNYVEIFNKINYFFRDDQVINGTEYSPKEFGYFITFA. N-linked (GlcNAc...) asparagine glycans are attached at residues Asn-5 and Asn-29. The helical transmembrane segment at 46–66 threads the bilayer; sequence YMLIILFGAIGNFLTIIVVIL. Residues 67–85 are Cytoplasmic-facing; it reads NPAMRTTRNFFILNLALSD. A helical transmembrane segment spans residues 86–106; that stretch reads FFVCIVTAPTTLYTVLYMFWP. Over 107–122 the chain is Extracellular; it reads FSRTLCKIAGSLQGFN. Residues Cys-112 and Cys-194 are joined by a disulfide bond. Residues 123 to 143 form a helical membrane-spanning segment; that stretch reads IFLSTFSIASIAVDRYVLIIF. Topologically, residues 144–152 are cytoplasmic; it reads PTKRERQQN. A helical transmembrane segment spans residues 153–173; the sequence is LSFCFFIMIWVISLILAVPLL. Topologically, residues 174-210 are extracellular; that stretch reads QASDLTPVFVEPSCDLALYICHEQNEIWEKMIISKGT. A helical membrane pass occupies residues 211 to 231; it reads YTLAVLITQYAFPLFSLVFAY. Topologically, residues 232 to 272 are cytoplasmic; that stretch reads SRIAHRMKLRFANRNQNVTTNTNTSQRRRSVVERQRRTHLL. Residues 273–293 traverse the membrane as a helical segment; sequence LVCVVAVFAVAWLPLNVFHIF. At 294-306 the chain is on the extracellular side; sequence NTFELVNSFSVTT. A helical membrane pass occupies residues 307 to 328; it reads FSICHCLAMCSACLNPLIYAFF. The Cytoplasmic portion of the chain corresponds to 329 to 402; that stretch reads NHNFRIEFMH…LSAMEQDEQL (74 aa).

Belongs to the G-protein coupled receptor 1 family.

It is found in the cell membrane. In terms of biological role, could be a receptor for neuropeptide Y and peptide YY. This is Putative neuropeptide Y receptor 11 (npr-11) from Caenorhabditis elegans.